Reading from the N-terminus, the 208-residue chain is WEB family protein At2g17940 (208 aa).

A coiled-coil region spans residues Arg78–Ser113.

It belongs to the WEB family.

This Arabidopsis thaliana (Mouse-ear cress) protein is WEB family protein At2g17940.